The chain runs to 496 residues: Glycerol kinase (496 aa).

Residue Thr-12 participates in ADP binding. ATP is bound by residues Thr-12, Thr-13, and Ser-14. Sn-glycerol 3-phosphate is bound at residue Thr-12. Residue Arg-16 coordinates ADP. Residues Arg-82, Glu-83, and Tyr-134 each coordinate sn-glycerol 3-phosphate. 3 residues coordinate glycerol: Arg-82, Glu-83, and Tyr-134. His-230 carries the post-translational modification Phosphohistidine; by HPr. Sn-glycerol 3-phosphate is bound at residue Asp-244. Glycerol is bound by residues Asp-244 and Gln-245. Residues Thr-266 and Gly-309 each coordinate ADP. Residues Thr-266, Gly-309, Gln-313, and Gly-410 each coordinate ATP. ADP contacts are provided by Gly-410 and Asn-414.

It belongs to the FGGY kinase family. In terms of assembly, homotetramer and homodimer (in equilibrium). Post-translationally, the phosphoenolpyruvate-dependent sugar phosphotransferase system (PTS), including enzyme I, and histidine-containing protein (HPr) are required for the phosphorylation, which leads to the activation of the enzyme.

It catalyses the reaction glycerol + ATP = sn-glycerol 3-phosphate + ADP + H(+). It participates in polyol metabolism; glycerol degradation via glycerol kinase pathway; sn-glycerol 3-phosphate from glycerol: step 1/1. With respect to regulation, activated by phosphorylation and inhibited by fructose 1,6-bisphosphate (FBP). Key enzyme in the regulation of glycerol uptake and metabolism. Catalyzes the phosphorylation of glycerol to yield sn-glycerol 3-phosphate. This Bacillus thuringiensis subsp. konkukian (strain 97-27) protein is Glycerol kinase.